The sequence spans 136 residues: Cyclase aurE (136 aa).

This sequence belongs to the aurE cyclase family.

Its pathway is polyketide biosynthesis. In terms of biological role, cyclase; part of the gene cluster that mediates the biosynthesis of aurovertins, fungal polyketides that exhibit potent inhibition of adenosine triphosphate synthase. Tha biosynthesis starts with the HR-PKS aurA that selects propionate as the starter unit; synthesizes a hexa-ene chain through the repeated functions of the KR and DH domains in the first six iterations; selectively introduces three alpha-methyl substitutions at C4, C6, and C16 using the S-adensylmethionine-dependent cMET; and shuts off KR and DH in the last three iterations to afford a 1,3,5-triketo portion that can undergo intramolecular cyclization to yield the alpha-pyrone intermediate. AurE may act as a cyclase and enhances the rate of pyrone formation and product release of aurA. The methyltransferase aurB then methylates the C17 hydroxyl group. C17 methylation is required to initiate epoxidation by the downstream monooxygenase aurC. The monooxygenase aurC and the epoxide hydrolase aurD can iteratively transform the terminal triene portion of the methylated precursor into the dioxabicyclo[3.2.1]octane scaffold of aurovertin E. Epoxidation modifications of the precursor occur in two separate steps; bis-epoxidation of the two terminal olefins takes place first, followed by another epoxidation that occurs at C7-C8 after tetrahydrofuran formation. The O-acyltransferase aurG converts aurovertin E to aurovertin A. The sequence is that of Cyclase aurE from Calcarisporium arbuscula (Dendryphion arbuscula).